A 234-amino-acid polypeptide reads, in one-letter code: Triosephosphate isomerase (234 aa).

Residue 8–10 coordinates substrate; that stretch reads NFK. The active-site Electrophile is His-90. Residue Glu-159 is the Proton acceptor of the active site. Residues Gly-165 and Ser-197 each contribute to the substrate site.

Belongs to the triosephosphate isomerase family. In terms of assembly, homodimer.

The protein localises to the cytoplasm. It catalyses the reaction D-glyceraldehyde 3-phosphate = dihydroxyacetone phosphate. The protein operates within carbohydrate biosynthesis; gluconeogenesis. It functions in the pathway carbohydrate degradation; glycolysis; D-glyceraldehyde 3-phosphate from glycerone phosphate: step 1/1. Involved in the gluconeogenesis. Catalyzes stereospecifically the conversion of dihydroxyacetone phosphate (DHAP) to D-glyceraldehyde-3-phosphate (G3P). The chain is Triosephosphate isomerase from Helicobacter pylori (strain Shi470).